Consider the following 117-residue polypeptide: Large ribosomal subunit protein bL20 (117 aa).

The protein belongs to the bacterial ribosomal protein bL20 family.

In terms of biological role, binds directly to 23S ribosomal RNA and is necessary for the in vitro assembly process of the 50S ribosomal subunit. It is not involved in the protein synthesizing functions of that subunit. This Geotalea daltonii (strain DSM 22248 / JCM 15807 / FRC-32) (Geobacter daltonii) protein is Large ribosomal subunit protein bL20.